Here is a 165-residue protein sequence, read N- to C-terminus: Large ribosomal subunit protein uL10 (165 aa).

N6-acetyllysine occurs at positions 37 and 105.

The protein belongs to the universal ribosomal protein uL10 family. As to quaternary structure, part of the ribosomal stalk of the 50S ribosomal subunit. The N-terminus interacts with L11 and the large rRNA to form the base of the stalk. The C-terminus forms an elongated spine to which L12 dimers bind in a sequential fashion forming a multimeric L10(L12)X complex.

Functionally, protein L10 is also a translational repressor protein. It controls the translation of the rplJL-rpoBC operon by binding to its mRNA. In terms of biological role, forms part of the ribosomal stalk, playing a central role in the interaction of the ribosome with GTP-bound translation factors. This chain is Large ribosomal subunit protein uL10 (rplJ), found in Escherichia coli O6:H1 (strain CFT073 / ATCC 700928 / UPEC).